Consider the following 394-residue polypeptide: Actin-related protein 2-A (394 aa).

ATP is bound by residues 160-162, 214-218, and 305-310; these read GDG, RMIKE, and GGSTMY.

It belongs to the actin family. ARP2 subfamily. As to quaternary structure, component of the Arp2/3 complex composed of actr2/arp2, actr3/arp3, arpc1 (arpc1a or arpc1b), arpc2, arpc3, arpc4 and arpc5.

The protein localises to the cytoplasm. The protein resides in the cytoskeleton. It is found in the cell projection. Its subcellular location is the nucleus. ATP-binding component of the Arp2/3 complex, a multiprotein complex that mediates actin polymerization upon stimulation by nucleation-promoting factor (NPF). The Arp2/3 complex mediates the formation of branched actin networks in the cytoplasm, providing the force for cell motility. Seems to contact the pointed end of the daughter actin filament. In addition to its role in the cytoplasmic cytoskeleton, the Arp2/3 complex also promotes actin polymerization in the nucleus, thereby regulating gene transcription and repair of damaged DNA. The Arp2/3 complex promotes homologous recombination (HR) repair in response to DNA damage by promoting nuclear actin polymerization, leading to drive motility of double-strand breaks (DSBs). The polypeptide is Actin-related protein 2-A (actr2-a) (Xenopus laevis (African clawed frog)).